The primary structure comprises 465 residues: Probable multidrug resistance protein NorM (465 aa).

10 consecutive transmembrane segments (helical) span residues 50-72 (MAAI…GLLL), 92-114 (HQVR…LIYH), 127-149 (HLAQ…YLLL), 164-186 (PAMI…FIYG), 193-215 (FGAV…LMIS), 248-270 (GLPI…LLLS), 283-305 (ALNT…TILV), 320-342 (ISYV…TVVL), 393-412 (ILYI…GYIL), and 422-444 (MGPT…LLFY).

The protein belongs to the multi antimicrobial extrusion (MATE) (TC 2.A.66.1) family.

It localises to the cell inner membrane. Multidrug efflux pump. This Mannheimia succiniciproducens (strain KCTC 0769BP / MBEL55E) protein is Probable multidrug resistance protein NorM (norM).